Consider the following 166-residue polypeptide: Ubiquitin-conjugating enzyme E2 7 (166 aa).

At alanine 2 the chain carries N-acetylalanine. The UBC core domain maps to 4-164; it reads QASLLLQKQL…VSRCVRKSQE (161 aa). Cysteine 89 acts as the Glycyl thioester intermediate in catalysis.

This sequence belongs to the ubiquitin-conjugating enzyme family.

The catalysed reaction is S-ubiquitinyl-[E1 ubiquitin-activating enzyme]-L-cysteine + [E2 ubiquitin-conjugating enzyme]-L-cysteine = [E1 ubiquitin-activating enzyme]-L-cysteine + S-ubiquitinyl-[E2 ubiquitin-conjugating enzyme]-L-cysteine.. It participates in protein modification; protein ubiquitination. Functionally, accepts the ubiquitin from the E1 complex and catalyzes its covalent attachment to other proteins. Involved in the formation of multiubiquitin chains. Signal the protein for selective degradation. In Arabidopsis thaliana (Mouse-ear cress), this protein is Ubiquitin-conjugating enzyme E2 7 (UBC7).